Consider the following 595-residue polypeptide: MTANGLLQICGYLGVLLALAKPLGSYMAAVYEGRSATVRVLASVERFIYRITGIDPEAEMRWTGYASAFLVFNLLGVLAVYALQRCQGFLPLNPQGLPAVAPDSAFNTAISFATNTNWQGYGGEMTLSHLTQMLGLTVQNFVSAASGMAVLVALIRGFVRRNADTLGNFWVDLTRSILHILLPLSFLLALLLIGQGVVQTFEPYRNVTLVEATGYDRPKQDEGGHPLVDADGNPVTEHVTVSEQTLALGPAASQVAIKQLGTNGGGFFSVNSAHPFENPTPFSNFLEMLAILVISGALCHTFGVMVGDTRQGWVILAAMTLIFVPLLFVTVLCEQGGNPAFAALGVDPAGGNMEGKETRFGIVNSALWATATTAASNGSVNAMHDSFTPLGGLVPMWLMQLGEVVFGGVGSGLYGMLVFAIVAVFVAGLMIGRTPEYLGKKIEAYEMKMAAIVILVPPLMVLGGTAVAVMLDAGKSSVFNPGAHGFSEILYAFSSAGNNNGSAFAGLAANTPFYNLMLGLAMWFSRYWLAVPVLAIAGALAAKNYVPPGAGTLPTHTPMFVGLLVGVVIIVGALTFIPALALGPIVEHLMMIGAR.

10 consecutive transmembrane segments (helical) span residues 9–29 (ICGYLGVLLALAKPLGSYMAA), 63–83 (TGYASAFLVFNLLGVLAVYAL), 135–155 (GLTVQNFVSAASGMAVLVALI), 177–197 (ILHILLPLSFLLALLLIGQGV), 285–305 (FLEMLAILVISGALCHTFGVM), 312–332 (GWVILAAMTLIFVPLLFVTVL), 412–432 (GLYGMLVFAIVAVFVAGLMIG), 451–471 (AIVILVPPLMVLGGTAVAVML), 516–536 (LMLGLAMWFSRYWLAVPVLAI), and 560–580 (FVGLLVGVVIIVGALTFIPAL).

Belongs to the KdpA family. The system is composed of three essential subunits: KdpA, KdpB and KdpC.

It localises to the cell inner membrane. In terms of biological role, part of the high-affinity ATP-driven potassium transport (or Kdp) system, which catalyzes the hydrolysis of ATP coupled with the electrogenic transport of potassium into the cytoplasm. This subunit binds the periplasmic potassium ions and delivers the ions to the membrane domain of KdpB through an intramembrane tunnel. The polypeptide is Potassium-transporting ATPase potassium-binding subunit (Methylococcus capsulatus (strain ATCC 33009 / NCIMB 11132 / Bath)).